A 170-amino-acid polypeptide reads, in one-letter code: Shikimate kinase (170 aa).

Position 11–16 (11–16) interacts with ATP; sequence LSGKST. Ser-15 serves as a coordination point for Mg(2+). Asp-33, Arg-57, and Gly-79 together coordinate substrate. ATP is bound at residue Arg-119. Arg-137 is a binding site for substrate.

Belongs to the shikimate kinase family. In terms of assembly, monomer. Mg(2+) is required as a cofactor.

The protein localises to the cytoplasm. It carries out the reaction shikimate + ATP = 3-phosphoshikimate + ADP + H(+). The protein operates within metabolic intermediate biosynthesis; chorismate biosynthesis; chorismate from D-erythrose 4-phosphate and phosphoenolpyruvate: step 5/7. Catalyzes the specific phosphorylation of the 3-hydroxyl group of shikimic acid using ATP as a cosubstrate. The polypeptide is Shikimate kinase (Clostridium botulinum (strain 657 / Type Ba4)).